An 868-amino-acid polypeptide reads, in one-letter code: DNA mismatch repair protein MutS (868 aa).

621 to 628 contributes to the ATP binding site; that stretch reads GPNMGGKS. The segment at 803 to 852 is disordered; sequence LESGDGGDTGSAQLPLFGPEPVFPPPAQPEPEPDPIREAVENLDPDGLTP. Over residues 823-832 the composition is skewed to pro residues; the sequence is PVFPPPAQPE.

This sequence belongs to the DNA mismatch repair MutS family.

Its function is as follows. This protein is involved in the repair of mismatches in DNA. It is possible that it carries out the mismatch recognition step. This protein has a weak ATPase activity. The chain is DNA mismatch repair protein MutS from Halorhodospira halophila (strain DSM 244 / SL1) (Ectothiorhodospira halophila (strain DSM 244 / SL1)).